Reading from the N-terminus, the 454-residue chain is Cathepsin C (454 aa).

Residues M1–A20 form the signal peptide. The propeptide occupies D21–N217. N-linked (GlcNAc...) asparagine glycosylation is present at N25. Disulfide bonds link C26–C107, C244–C287, and C280–C321. C247 is an active-site residue. The N-linked (GlcNAc...) asparagine glycan is linked to N265. Position 291 (F291) interacts with chloride. N326 is a glycosylation site (N-linked (GlcNAc...) asparagine). Y337 is a binding site for chloride. Active-site residues include H398 and N420.

This sequence belongs to the peptidase C1 family. It depends on chloride as a cofactor.

It is found in the lysosome. Thiol protease. Has a role as a digestive enzyme. The sequence is that of Cathepsin C from Schistosoma mansoni (Blood fluke).